The primary structure comprises 504 residues: Maturase K (504 aa).

This sequence belongs to the intron maturase 2 family. MatK subfamily.

The protein localises to the plastid. Its subcellular location is the chloroplast. Functionally, usually encoded in the trnK tRNA gene intron. Probably assists in splicing its own and other chloroplast group II introns. The sequence is that of Maturase K from Hamamelis virginiana (Witch-hazel).